Reading from the N-terminus, the 146-residue chain is Histone H2A.1 (146 aa).

The disordered stretch occupies residues 118 to 146 (SPAAAEKEAKSPKKKTSTKSPKKKVAAKE). Short sequence motifs (SPKK motif) lie at residues 128–131 (SPKK) and 137–140 (SPKK). Positions 129-146 (PKKKTSTKSPKKKVAAKE) are enriched in basic residues.

It belongs to the histone H2A family. The nucleosome is a histone octamer containing two molecules each of H2A, H2B, H3 and H4 assembled in one H3-H4 heterotetramer and two H2A-H2B heterodimers. The octamer wraps approximately 147 bp of DNA. Phosphorylated within its C-terminal part, probably at the SPKK motifs. As to expression, expressed preferentially in meristematic tissues of young seedlings, in stigma and ovary but not in pollen.

The protein localises to the nucleus. It localises to the chromosome. Its function is as follows. Core component of nucleosome. Nucleosomes wrap and compact DNA into chromatin, limiting DNA accessibility to the cellular machineries which require DNA as a template. Histones thereby play a central role in transcription regulation, DNA repair, DNA replication and chromosomal stability. DNA accessibility is regulated via a complex set of post-translational modifications of histones, also called histone code, and nucleosome remodeling. The protein is Histone H2A.1 (H2A-9) of Triticum aestivum (Wheat).